Reading from the N-terminus, the 162-residue chain is Phosphopantetheine adenylyltransferase (162 aa).

Ser11 provides a ligand contact to substrate. Residues 11 to 12 (SF) and His19 contribute to the ATP site. Substrate is bound by residues Lys43, Val76, and Arg90. Residues 91–93 (GLR), Glu101, and 126–132 (LKFVSSS) each bind ATP.

Belongs to the bacterial CoaD family. As to quaternary structure, homohexamer. It depends on Mg(2+) as a cofactor.

It localises to the cytoplasm. It catalyses the reaction (R)-4'-phosphopantetheine + ATP + H(+) = 3'-dephospho-CoA + diphosphate. It functions in the pathway cofactor biosynthesis; coenzyme A biosynthesis; CoA from (R)-pantothenate: step 4/5. Reversibly transfers an adenylyl group from ATP to 4'-phosphopantetheine, yielding dephospho-CoA (dPCoA) and pyrophosphate. The chain is Phosphopantetheine adenylyltransferase from Streptococcus suis (strain 05ZYH33).